The sequence spans 761 residues: Ribonucleoside-diphosphate reductase 1 subunit alpha (761 aa).

The 91-residue stretch at 5–95 folds into the ATP-cone domain; that stretch reads LLVTKRDGST…IFHLRKKAYG (91 aa). ATP contacts are provided by residues K9, 15–21, T55, and K91; that span reads ERINLDK. Position 209 (T209) interacts with GDP. A disulfide bridge connects residues C225 and C462. DTTP contacts are provided by residues 232–234, R262, and R269; that span reads DSL. Position 283 is an N6-acetyllysine (K283). N437 contacts GDP. Catalysis depends on N437, which acts as the Proton acceptor. C439 acts as the Cysteine radical intermediate in catalysis. Residues E441 and 623-625 contribute to the GDP site; that span reads ETS. Residue E441 is the Proton acceptor of the active site.

Belongs to the ribonucleoside diphosphate reductase large chain family. Tetramer of two alpha (R1) and two beta (R2) subunits. The B1 protein is a dimer of alpha subunits. A radical transfer pathway occurs between 'Tyr-122' of R2 and R1. Binding of the substrate occurs primarily when the active-site cysteines are reduced.

It catalyses the reaction a 2'-deoxyribonucleoside 5'-diphosphate + [thioredoxin]-disulfide + H2O = a ribonucleoside 5'-diphosphate + [thioredoxin]-dithiol. With respect to regulation, under complex allosteric control mediated by deoxynucleoside triphosphates and ATP binding to separate specificity and activation sites on the alpha subunit. The type of nucleotide bound at the specificity site determines substrate preference. It seems probable that ATP makes the enzyme reduce CDP and UDP, dGTP favors ADP reduction and dTTP favors GDP reduction. Stimulated by ATP and inhibited by dATP binding to the activity site. In vitro, its activity is increased by dithiothreitol (DTT) or thioredoxins (non-specific). Inhibited by hydroxyurea, leads to dNTP depletion, replication fork arrest and genomic instability. Functionally, provides the precursors necessary for DNA synthesis. Catalyzes the biosynthesis of deoxyribonucleotides from the corresponding ribonucleotides. R1 contains the binding sites for both substrates and allosteric effectors and carries out the actual reduction of the ribonucleotide. It also provides redox-active cysteines. This chain is Ribonucleoside-diphosphate reductase 1 subunit alpha (nrdA), found in Escherichia coli (strain K12).